The sequence spans 170 residues: 3-hydroxydecanoyl-[acyl-carrier-protein] dehydratase (170 aa).

The active site involves His-71.

This sequence belongs to the thioester dehydratase family. FabA subfamily. As to quaternary structure, homodimer.

It localises to the cytoplasm. It catalyses the reaction a (3R)-hydroxyacyl-[ACP] = a (2E)-enoyl-[ACP] + H2O. The enzyme catalyses (3R)-hydroxydecanoyl-[ACP] = (2E)-decenoyl-[ACP] + H2O. The catalysed reaction is (2E)-decenoyl-[ACP] = (3Z)-decenoyl-[ACP]. Its pathway is lipid metabolism; fatty acid biosynthesis. Its function is as follows. Necessary for the introduction of cis unsaturation into fatty acids. Catalyzes the dehydration of (3R)-3-hydroxydecanoyl-ACP to E-(2)-decenoyl-ACP and then its isomerization to Z-(3)-decenoyl-ACP. Can catalyze the dehydratase reaction for beta-hydroxyacyl-ACPs with saturated chain lengths up to 16:0, being most active on intermediate chain length. The protein is 3-hydroxydecanoyl-[acyl-carrier-protein] dehydratase of Chelativorans sp. (strain BNC1).